Consider the following 907-residue polypeptide: MLEKNYDAASIEQRIAKKWEARGAFKAGMGSKSAAQSFCVMLPPPNVTGSLHMGHALNTTIQDIVVRFQRMRGKNVLWQPGMDHAGIATQMVVERQLAERQEPTRQEMGREKFVERIWEWRYETGGVIANQLRRLGVSCDWSRERFTMDDGLSEAVREVFVTLYKQGLIYRDKRLVNWDPKLLTAISDLEVEQKEVKGHLWHFRYPLEGKLFDPSDATTFITVATTRPETMLGDTGIAVNPEDDRYRNLIGQNAILPLVGRRLSIVADAYANPDEGSGAVKITPAHDFNDFEVGRRNNLRLINIFTEKAEVFLHENEAFFEGVVLSDALKMLVKDLDQKDRFIARDQIVSLMEEKGYLVTVDDHPHTVPYGDRSGVPIEPFLTDQWYVNAAELAKPAIEAVHQGKTQFIPDSWQKTYFNWMQNIQPWCVSRQLWWGHQIPAWYGPDGRVFVEKSEEEALNSALSHYGEVVNLTRDPDVLDTWFSSALWPFSTLGWPNKTPELATFYPTSLSVTGFDIIFFWVARMMMMGLHFMGEVPFPTVYVHALVRDQKGAKMSKSKGNIIDPLELIDQYSADSLRFTLAIMAAQGRDVKLDPSRIAGYRNFATKLWNATRFAQMNGVKHDPDFKPEKAKLALNRWILTELSKTVVAVTTGIENYKFNESASALYRFIWNTLCDWYLELLKPIFQGSNEDAKNEVQACTAWVLDEVYKLLHPFMPHMTEELWSLTETLGMKREDMLALIQWPEASFSDEEAASDINWLIDAVSAIRSVRFEMNIPAAALAPLVIVEGGELTLKRVELYESLLKKLARVETISFSDKAPALSAQMILGEAIFCLPLGQLIDLEAERARLMKDVSKIEQDIEKLSAKLSNPKFIENAKPEIVEVERNRIVELRTAQKKISLALERLV.

Positions 45–55 (PNVTGSLHMGH) match the 'HIGH' region motif. The 'KMSKS' region motif lies at 554 to 558 (KMSKS). Lys557 serves as a coordination point for ATP. The stretch at 838–870 (GQLIDLEAERARLMKDVSKIEQDIEKLSAKLSN) forms a coiled coil.

This sequence belongs to the class-I aminoacyl-tRNA synthetase family. ValS type 1 subfamily. In terms of assembly, monomer.

Its subcellular location is the cytoplasm. It catalyses the reaction tRNA(Val) + L-valine + ATP = L-valyl-tRNA(Val) + AMP + diphosphate. In terms of biological role, catalyzes the attachment of valine to tRNA(Val). As ValRS can inadvertently accommodate and process structurally similar amino acids such as threonine, to avoid such errors, it has a 'posttransfer' editing activity that hydrolyzes mischarged Thr-tRNA(Val) in a tRNA-dependent manner. This Bartonella henselae (strain ATCC 49882 / DSM 28221 / CCUG 30454 / Houston 1) (Rochalimaea henselae) protein is Valine--tRNA ligase.